The following is a 468-amino-acid chain: ERO1-like protein alpha (468 aa).

Residues 1–23 form the signal peptide; that stretch reads MGRGWGFLFGLLGAVWLLSSGHG. Intrachain disulfides connect Cys-35/Cys-48, Cys-37/Cys-46, Cys-85/Cys-391, Cys-94/Cys-99, Cys-94/Cys-131, Cys-99/Cys-104, Cys-208/Cys-241, and Cys-394/Cys-397. Ser-106 and Ser-143 each carry phosphoserine. Residue Ser-145 is modified to Phosphoserine; by FAM20C. Arg-187, Thr-189, and Trp-200 together coordinate FAD. FAD-binding residues include Ser-252 and His-255. N-linked (GlcNAc...) asparagine glycosylation occurs at Asn-280. Positions 287 and 300 each coordinate FAD. Asn-384 carries N-linked (GlcNAc...) asparagine glycosylation.

Belongs to the EROs family. Predominantly monomer. May function both as a monomer and a homodimer. Interacts with PDILT. Interacts with ERP44; the interaction results in retention of ERO1A in the endoplasmic reticulum. Requires FAD as cofactor. N-glycosylated. In terms of processing, the Cys-94/Cys-99 and Cys-394/Cys-397 disulfide bonds constitute the redox-active center. The Cys-94/Cys-99 disulfide bond may accept electron from P4HB and funnel them to the active site disulfide Cys-394/Cys-397. The regulatory Cys-99/Cys-104 disulfide bond stabilizes the other regulatory bond Cys-94/Cys-131. Post-translationally, phosphorylated on Ser-145 by FAM20C in the Golgi which increases its enzymatic activity. Phosphorylation is induced by lactation. It is also induced by hypoxia and reductive stress. Widely expressed at low level. Expressed at high level in upper digestive tract. Highly expressed in esophagus. Weakly expressed in stomach and duodenum.

The protein resides in the endoplasmic reticulum membrane. Its subcellular location is the golgi apparatus lumen. It localises to the secreted. It is found in the cell projection. The protein localises to the dendrite. With respect to regulation, enzyme activity is tightly regulated to prevent the accumulation of reactive oxygen species in the endoplasmic reticulum. Reversibly down-regulated by the formation of disulfide bonds between the active site Cys-94 and Cys-131, and between Cys-99 and Cys-104. Glutathione may be required to regulate its activity in the endoplasmic reticulum. Functionally, oxidoreductase involved in disulfide bond formation in the endoplasmic reticulum. Efficiently reoxidizes P4HB/PDI, the enzyme catalyzing protein disulfide formation, in order to allow P4HB to sustain additional rounds of disulfide formation. Following P4HB reoxidation, passes its electrons to molecular oxygen via FAD, leading to the production of reactive oxygen species (ROS) in the cell. Required for the proper folding of immunoglobulins. Plays an important role in ER stress-induced, CHOP-dependent apoptosis by activating the inositol 1,4,5-trisphosphate receptor IP3R1. Involved in the release of the unfolded cholera toxin from reduced P4HB/PDI in case of infection by V.cholerae, thereby playing a role in retrotranslocation of the toxin. This chain is ERO1-like protein alpha, found in Homo sapiens (Human).